Reading from the N-terminus, the 892-residue chain is Zinc finger protein 473 homolog (892 aa).

A KRAB domain is found at glutamate 23–phenylalanine 101. 2 stretches are compositionally biased toward polar residues: residues aspartate 66–proline 76 and alanine 84–leucine 97. Disordered stretches follow at residues aspartate 66–leucine 97 and glycine 134–glutamine 203. Composition is skewed to basic and acidic residues over residues serine 138–proline 156 and lysine 190–glutamine 203. 2 C2H2-type zinc fingers span residues tyrosine 209–histidine 231 and tyrosine 265–histidine 287. Polar residues predominate over residues serine 297–proline 308. Residues serine 297–threonine 370 are disordered. Composition is skewed to basic and acidic residues over residues glycine 313–serine 323 and glutamine 332–proline 353. 8 C2H2-type zinc fingers span residues phenylalanine 377–histidine 399, tyrosine 404–histidine 426, cysteine 432–histidine 454, tyrosine 460–histidine 482, histidine 488–histidine 510, histidine 516–histidine 538, phenylalanine 544–histidine 566, and tyrosine 572–histidine 594. Lysine 476 is covalently cross-linked (Glycyl lysine isopeptide (Lys-Gly) (interchain with G-Cter in SUMO2)). Lysine 602 is covalently cross-linked (Glycyl lysine isopeptide (Lys-Gly) (interchain with G-Cter in SUMO2)). Residues phenylalanine 697–histidine 719 form a C2H2-type 11; degenerate zinc finger. C2H2-type zinc fingers lie at residues phenylalanine 725 to histidine 747, phenylalanine 753 to histidine 775, phenylalanine 781 to histidine 803, tyrosine 809 to histidine 831, tyrosine 837 to histidine 859, and tyrosine 865 to histidine 887.

It belongs to the krueppel C2H2-type zinc-finger protein family. As to quaternary structure, interacts with the SLBP/pre-mRNA complex but not with SLBP alone. Interacts with LSM11 in a U7 snRNP-dependent manner.

It localises to the nucleus. Its function is as follows. Involved in histone 3'-end pre-mRNA processing by associating with U7 snRNP and interacting with SLBP/pre-mRNA complex. Increases histone 3'-end pre-mRNA processing but has no effect on U7 snRNP levels, when overexpressed. Required for cell cycle progression from G1 to S phases. The protein is Zinc finger protein 473 homolog (Znf473) of Mus musculus (Mouse).